A 484-amino-acid polypeptide reads, in one-letter code: Glycogen synthase (484 aa).

Lys15 serves as a coordination point for ADP-alpha-D-glucose.

The protein belongs to the glycosyltransferase 1 family. Bacterial/plant glycogen synthase subfamily.

The catalysed reaction is [(1-&gt;4)-alpha-D-glucosyl](n) + ADP-alpha-D-glucose = [(1-&gt;4)-alpha-D-glucosyl](n+1) + ADP + H(+). It participates in glycan biosynthesis; glycogen biosynthesis. Its function is as follows. Synthesizes alpha-1,4-glucan chains using ADP-glucose. This chain is Glycogen synthase, found in Geotalea daltonii (strain DSM 22248 / JCM 15807 / FRC-32) (Geobacter daltonii).